The primary structure comprises 340 residues: Putative Ig-like domain-containing protein C1 (340 aa).

The Ig-like domain occupies 207–294 (PTVTVTGIER…SSPRVMVPTI (88 aa)).

This Sus scrofa (Pig) protein is Putative Ig-like domain-containing protein C1.